Consider the following 126-residue polypeptide: Large ribosomal subunit protein bL12 (126 aa).

It belongs to the bacterial ribosomal protein bL12 family. As to quaternary structure, homodimer. Part of the ribosomal stalk of the 50S ribosomal subunit. Forms a multimeric L10(L12)X complex, where L10 forms an elongated spine to which 2 to 4 L12 dimers bind in a sequential fashion. Binds GTP-bound translation factors.

In terms of biological role, forms part of the ribosomal stalk which helps the ribosome interact with GTP-bound translation factors. Is thus essential for accurate translation. This chain is Large ribosomal subunit protein bL12, found in Legionella pneumophila (strain Paris).